Consider the following 144-residue polypeptide: Large ribosomal subunit protein uL14 (144 aa).

It belongs to the universal ribosomal protein uL14 family. As to quaternary structure, part of the 50S ribosomal subunit. Forms a cluster with proteins L3 and L24e, part of which may contact the 16S rRNA in 2 intersubunit bridges.

Its function is as follows. Binds to 23S rRNA. Forms part of two intersubunit bridges in the 70S ribosome. The sequence is that of Large ribosomal subunit protein uL14 from Caldivirga maquilingensis (strain ATCC 700844 / DSM 13496 / JCM 10307 / IC-167).